The following is a 503-amino-acid chain: Sodium/hydrogen exchanger 3 (503 aa).

The Cytoplasmic portion of the chain corresponds to 1-22 (MVIGLSTMLEKTEALFASDHAS). The helical transmembrane segment at 23 to 43 (VVSMNLFVALLCACIVLGHLL) threads the bilayer. At 44 to 51 (EETRWMNE) the chain is on the vacuolar side. N-linked (GlcNAc...) asparagine glycosylation is present at N50. Residues 52-72 (SITALIIGSCTGIVILLISGG) traverse the membrane as a helical segment. Over 73-76 (KSSR) the chain is Cytoplasmic. Residues 77–97 (ILVFSEDLFFIYLLPPIIFNA) constitute an intramembrane region (helical). Residues 98–109 (GFQVKKKQFFRN) are Cytoplasmic-facing. The chain crosses the membrane as a helical span at residues 110 to 130 (FMTIMLFGAIGTLISFVIISF). The Vacuolar segment spans residues 131 to 138 (GAKHLFEK). The helical transmembrane segment at 139–159 (MNIGDLTIADYLAIGAIFSAT) threads the bilayer. At 160 to 174 (DSVCTLQVLNQDETP) the chain is on the cytoplasmic side. Residues 175-195 (LLYSLVFGEGVVNDATSVVLF) traverse the membrane as a helical segment. Residues 196 to 219 (NAIQRFDLTNINSAIALEFAGNFF) are Vacuolar-facing. The chain crosses the membrane as a helical span at residues 220–240 (YLFILSTALGVAAGLLSAFVI). Topologically, residues 241–265 (KKLYIGRHSTDREVALMMLLAYLSY) are cytoplasmic. The chain crosses the membrane as a helical span at residues 266–286 (MLAELFHLSSILTVFFCGIVM). Topologically, residues 287 to 305 (SHYTWHNVTDKSKVTTKHT) are vacuolar. The N-linked (GlcNAc...) asparagine glycan is linked to N293. The helical transmembrane segment at 306–326 (FAAMSFLAEIFIFLYVGMDAL) threads the bilayer. Over 327–345 (DIEKWDVVRNSPGQSIGVS) the chain is Cytoplasmic. The chain crosses the membrane as a helical span at residues 346–366 (SILLGLILLGRAAFVFPLSFL). Residues 367–383 (SNLTKSSPDEKIDLKKQ) lie on the Vacuolar side of the membrane. N-linked (GlcNAc...) asparagine glycosylation occurs at N368. Residues 384 to 406 (VTIWWAGLMRGAVSMALAYNQFT) traverse the membrane as a helical segment. Over 407-416 (TSGHTKVLGN) the chain is Cytoplasmic. Residues 417 to 437 (AIMITSTITVVLFSTVVFGLL) form a helical membrane-spanning segment. Over 438–503 (TKPLVKHLQP…FWKSPSRFTH (66 aa)) the chain is Vacuolar.

This sequence belongs to the monovalent cation:proton antiporter 1 (CPA1) transporter (TC 2.A.36) family. In terms of tissue distribution, expressed in roots.

The protein localises to the vacuole membrane. The catalysed reaction is Na(+)(in) + H(+)(out) = Na(+)(out) + H(+)(in). It catalyses the reaction K(+)(in) + H(+)(out) = K(+)(out) + H(+)(in). Functionally, may act in low affinity electroneutral exchange of protons for cations such as Na(+) or K(+) across membranes. May also exchange Li(+) and Cs(+) with a lower affinity. The polypeptide is Sodium/hydrogen exchanger 3 (NHX3) (Arabidopsis thaliana (Mouse-ear cress)).